Consider the following 300-residue polypeptide: MTDLPDTDFTQRFIFDENDARGELVSLERSYAEVLAKHPYPEPVAQLLGELMAAASLLVGTMKFDGLLILQARSEGPVPMLMIECSSEREIRGLARYEADQIAPDATLSDLMANGVLAITVDPTEGQRYQGIVDLDGETLSDCFTNYFVMSQQVGTKFWLNADGKRARGLLLQQLPADRIKDDDERTDSWRKLTALAGTLTAEELLGLDNETILHRLYHEEAVRLFEEQSLRFNCSCSRERSANALVSLGLEDAQNLVVEHGGNIEIDCQFCNERYLFDAADVAQLFAGAGIDSPSDTRH.

Intrachain disulfides connect Cys235/Cys237 and Cys269/Cys272.

Belongs to the HSP33 family. Post-translationally, under oxidizing conditions two disulfide bonds are formed involving the reactive cysteines. Under reducing conditions zinc is bound to the reactive cysteines and the protein is inactive.

It localises to the cytoplasm. Redox regulated molecular chaperone. Protects both thermally unfolding and oxidatively damaged proteins from irreversible aggregation. Plays an important role in the bacterial defense system toward oxidative stress. The sequence is that of 33 kDa chaperonin from Pseudomonas fluorescens (strain SBW25).